Consider the following 621-residue polypeptide: uncharacterized protein (621 aa).

Positions 1-15 are cleaved as a signal peptide; that stretch reads MRRSVCYVTPSVARA.

This sequence belongs to the chlamydial CPn_0512/CT_425/TC_0708 family.

This is an uncharacterized protein from Chlamydia trachomatis serovar D (strain ATCC VR-885 / DSM 19411 / UW-3/Cx).